A 170-amino-acid polypeptide reads, in one-letter code: Myosin regulatory light chain 2 (170 aa).

Positions 1 to 13 (MSKAAKKKSSKKR) are enriched in basic residues. The segment at 1–22 (MSKAAKKKSSKKRSGSEAAQFD) is disordered. EF-hand domains are found at residues 24-59 (KTIQ…MGQI) and 93-128 (DPEA…KRGE). Ca(2+) contacts are provided by aspartate 37, asparagine 39, aspartate 41, and aspartate 48.

In terms of assembly, myosin is a hexamer of 2 heavy chains and 4 light chains (two regulatory light chains and two essential light chains).

The chain is Myosin regulatory light chain 2 (mlc-2) from Caenorhabditis elegans.